We begin with the raw amino-acid sequence, 351 residues long: Anthranilate phosphoribosyltransferase (351 aa).

5-phospho-alpha-D-ribose 1-diphosphate contacts are provided by residues Gly-80, Gly-83 to Asp-84, Thr-88, Asn-90 to Thr-93, Lys-108 to Ser-116, and Ser-120. Residue Gly-80 participates in anthranilate binding. Ser-92 is a binding site for Mg(2+). Residue Asn-111 participates in anthranilate binding. Arg-166 is a binding site for anthranilate. Positions 229 and 230 each coordinate Mg(2+).

Belongs to the anthranilate phosphoribosyltransferase family. As to quaternary structure, homodimer. Mg(2+) serves as cofactor.

It catalyses the reaction N-(5-phospho-beta-D-ribosyl)anthranilate + diphosphate = 5-phospho-alpha-D-ribose 1-diphosphate + anthranilate. It functions in the pathway amino-acid biosynthesis; L-tryptophan biosynthesis; L-tryptophan from chorismate: step 2/5. Functionally, catalyzes the transfer of the phosphoribosyl group of 5-phosphorylribose-1-pyrophosphate (PRPP) to anthranilate to yield N-(5'-phosphoribosyl)-anthranilate (PRA). This Pelodictyon phaeoclathratiforme (strain DSM 5477 / BU-1) protein is Anthranilate phosphoribosyltransferase.